We begin with the raw amino-acid sequence, 368 residues long: Chaperone protein DnaJ (368 aa).

The region spanning 5–70 (DYYQVLGVPR…KKRKLYDTHG (66 aa)) is the J domain. The segment at 124–201 (GVERQIQIPT…CNGAGRVEDH (78 aa)) adopts a CR-type zinc-finger fold. 8 residues coordinate Zn(2+): Cys-137, Cys-140, Cys-153, Cys-156, Cys-175, Cys-178, Cys-189, and Cys-192. CXXCXGXG motif repeat units lie at residues 137-144 (CTHCHGSG), 153-160 (CGTCRGSG), 175-182 (CPHCGGRG), and 189-196 (CKVCNGAG).

It belongs to the DnaJ family. As to quaternary structure, homodimer. Requires Zn(2+) as cofactor.

Its subcellular location is the cytoplasm. Participates actively in the response to hyperosmotic and heat shock by preventing the aggregation of stress-denatured proteins and by disaggregating proteins, also in an autonomous, DnaK-independent fashion. Unfolded proteins bind initially to DnaJ; upon interaction with the DnaJ-bound protein, DnaK hydrolyzes its bound ATP, resulting in the formation of a stable complex. GrpE releases ADP from DnaK; ATP binding to DnaK triggers the release of the substrate protein, thus completing the reaction cycle. Several rounds of ATP-dependent interactions between DnaJ, DnaK and GrpE are required for fully efficient folding. Also involved, together with DnaK and GrpE, in the DNA replication of plasmids through activation of initiation proteins. The protein is Chaperone protein DnaJ of Xylella fastidiosa (strain 9a5c).